The chain runs to 255 residues: Probable iron chelatin transport ATP-binding protein HP_0888 (255 aa).

The region spanning 3 to 240 (LEVKNLSFKY…HNLSALYDTP (238 aa)) is the ABC transporter domain. ATP is bound at residue 35–42 (APNGSGKT).

It belongs to the ABC transporter superfamily.

Its subcellular location is the cell inner membrane. In terms of biological role, part of a binding-protein-dependent transport system for an iron chelatin. Probably responsible for energy coupling to the transport system (Potential). The sequence is that of Probable iron chelatin transport ATP-binding protein HP_0888 from Helicobacter pylori (strain ATCC 700392 / 26695) (Campylobacter pylori).